The following is a 665-amino-acid chain: Chaperone protein dnaK1 (665 aa).

At threonine 198 the chain carries Phosphothreonine; by autocatalysis. Residues 634–665 (DDPWDNQMNSNSRNSRYGNSRDDDPWDNDYFL) form a disordered region. Positions 642–651 (NSNSRNSRYG) are enriched in low complexity.

The protein belongs to the heat shock protein 70 family.

Its function is as follows. Acts as a chaperone. The protein is Chaperone protein dnaK1 (dnaK1) of Prochlorococcus marinus subsp. pastoris (strain CCMP1986 / NIES-2087 / MED4).